Reading from the N-terminus, the 275-residue chain is NH(3)-dependent NAD(+) synthetase (275 aa).

46–53 (GISGGQDS) lines the ATP pocket. Asp-52 is a Mg(2+) binding site. Residue Arg-140 participates in deamido-NAD(+) binding. Residue Thr-160 coordinates ATP. Glu-165 contributes to the Mg(2+) binding site. Deamido-NAD(+) contacts are provided by Lys-173 and Asp-180. Residues Lys-189 and Thr-211 each contribute to the ATP site. Residue 260–261 (HK) coordinates deamido-NAD(+).

This sequence belongs to the NAD synthetase family. In terms of assembly, homodimer.

It catalyses the reaction deamido-NAD(+) + NH4(+) + ATP = AMP + diphosphate + NAD(+) + H(+). It functions in the pathway cofactor biosynthesis; NAD(+) biosynthesis; NAD(+) from deamido-NAD(+) (ammonia route): step 1/1. In terms of biological role, catalyzes the ATP-dependent amidation of deamido-NAD to form NAD. Uses ammonia as a nitrogen source. This chain is NH(3)-dependent NAD(+) synthetase, found in Escherichia fergusonii (strain ATCC 35469 / DSM 13698 / CCUG 18766 / IAM 14443 / JCM 21226 / LMG 7866 / NBRC 102419 / NCTC 12128 / CDC 0568-73).